Consider the following 391-residue polypeptide: 1-deoxy-D-xylulose 5-phosphate reductoisomerase (391 aa).

Positions 17, 18, 19, 20, 47, and 130 each coordinate NADPH. K131 is a binding site for 1-deoxy-D-xylulose 5-phosphate. E132 serves as a coordination point for NADPH. D156 provides a ligand contact to Mn(2+). 1-deoxy-D-xylulose 5-phosphate contacts are provided by S157, E158, S182, and H205. E158 provides a ligand contact to Mn(2+). G211 serves as a coordination point for NADPH. Residues S218, N223, K224, and E227 each contribute to the 1-deoxy-D-xylulose 5-phosphate site. E227 contributes to the Mn(2+) binding site.

Belongs to the DXR family. Mg(2+) is required as a cofactor. The cofactor is Mn(2+).

The enzyme catalyses 2-C-methyl-D-erythritol 4-phosphate + NADP(+) = 1-deoxy-D-xylulose 5-phosphate + NADPH + H(+). It functions in the pathway isoprenoid biosynthesis; isopentenyl diphosphate biosynthesis via DXP pathway; isopentenyl diphosphate from 1-deoxy-D-xylulose 5-phosphate: step 1/6. Its function is as follows. Catalyzes the NADPH-dependent rearrangement and reduction of 1-deoxy-D-xylulose-5-phosphate (DXP) to 2-C-methyl-D-erythritol 4-phosphate (MEP). The polypeptide is 1-deoxy-D-xylulose 5-phosphate reductoisomerase (Rhizobium meliloti (strain 1021) (Ensifer meliloti)).